Here is a 242-residue protein sequence, read N- to C-terminus: Probable septum site-determining protein MinC (242 aa).

Belongs to the MinC family. Interacts with MinD and FtsZ.

Functionally, cell division inhibitor that blocks the formation of polar Z ring septums. Rapidly oscillates between the poles of the cell to destabilize FtsZ filaments that have formed before they mature into polar Z rings. Prevents FtsZ polymerization. The protein is Probable septum site-determining protein MinC of Brucella anthropi (strain ATCC 49188 / DSM 6882 / CCUG 24695 / JCM 21032 / LMG 3331 / NBRC 15819 / NCTC 12168 / Alc 37) (Ochrobactrum anthropi).